Reading from the N-terminus, the 256-residue chain is Follistatin-related protein 3 (256 aa).

A signal peptide spans 1–23 (MRSGALWPLLWGALVWTVGSVGA). Residues 34-105 (GVCWLQQGRE…SCDGVECGPG (72 aa)) form the TB domain. 8 disulfides stabilise this stretch: cysteine 36–cysteine 59, cysteine 46–cysteine 90, cysteine 60–cysteine 93, cysteine 97–cysteine 108, cysteine 102–cysteine 117, cysteine 119–cysteine 151, cysteine 123–cysteine 144, and cysteine 133–cysteine 165. N-linked (GlcNAc...) asparagine glycosylation occurs at asparagine 71. The Follistatin-like 1 domain occupies 97–117 (CDGVECGPGKACRMLGGRPHC). Kazal-like domains lie at 111 to 167 (LGGR…RCQK) and 187 to 243 (SAHC…ICTG). The 24-residue stretch at 168-191 (SCAQVVCPRPQSCLVDQTGSAHCV) folds into the Follistatin-like 2 domain. Disulfide bonds link cysteine 193/cysteine 227, cysteine 198/cysteine 220, and cysteine 209/cysteine 241. The N-linked (GlcNAc...) asparagine glycan is linked to asparagine 213.

As to quaternary structure, interacts with INHBA and INHBB. Interacts with FN1. Interacts with ADAM12. Interacts with MLLT10; the interaction enhances MLLT10 in vitro transcriptional activity and self-association. Interacts with MSTN. As to expression, abundantly expressed in heart, lung, kidney and testis. Continuously expressed in embryonic heart.

The protein resides in the secreted. It localises to the nucleus. The secreted form is a binding and antagonizing protein for members of the TGF-beta family, such as activin, BMP2 and MSTN. Inhibits activin A-, activin B-, BMP2- and MSDT-induced cellular signaling; more effective on activin A than on activin B. Involved in bone formation; inhibits osteoclast differentiation. Involved in hematopoiesis; involved in differentiation of hemopoietic progenitor cells, increases hematopoietic cell adhesion to fibronectin and seems to contribute to the adhesion of hematopoietic precursor cells to the bone marrow stroma. The nuclear form is probably involved in transcriptional regulation via interaction with MLLT10. This Mus musculus (Mouse) protein is Follistatin-related protein 3 (Fstl3).